Reading from the N-terminus, the 139-residue chain is MNKHALLNADMNYLAATLGHTDEVTICDAGLPIPAQVKRIDLALTHGVPSFIATVKVWLATSQIEGIVLAQEFADVSPECHQALLAEIEAEQQATGRTFSVEYISHEAFKQRTGHSRAVIRTGECTPYANVIFKTGVVF.

The active-site Proton donor is His-20. Substrate is bound by residues Asp-28, His-106, and 128–130 (YAN).

Belongs to the RbsD / FucU family. RbsD subfamily. As to quaternary structure, homodecamer.

The protein resides in the cytoplasm. The enzyme catalyses beta-D-ribopyranose = beta-D-ribofuranose. It participates in carbohydrate metabolism; D-ribose degradation; D-ribose 5-phosphate from beta-D-ribopyranose: step 1/2. In terms of biological role, catalyzes the interconversion of beta-pyran and beta-furan forms of D-ribose. This Shewanella pealeana (strain ATCC 700345 / ANG-SQ1) protein is D-ribose pyranase.